The primary structure comprises 222 residues: Kinetochore protein Spc25 (222 aa).

Positions 51–86 (RHQRKVGKLQKVLMERREELDKRVSFIEELDRELEA) form a coiled coil.

Belongs to the SPC25 family. In terms of assembly, component of the Ndc80 complex, which is composed of Ndc80, Nuf2 and Spc25.

Its subcellular location is the nucleus. It localises to the chromosome. It is found in the centromere. The protein resides in the kinetochore. Acts as a component of the essential kinetochore-associated Ndc80 complex, which is required for chromosome segregation and spindle checkpoint activity during meiosis and mitosis. Required for kinetochore integrity and the organization of stable microtubule binding sites in the outer plate of the kinetochore. Participates in SAC signaling that responds specifically to disruptions in spindle microtubule dynamics. The NDC80 complex synergistically enhances the affinity of the SKA1 complex for microtubules and may allow the NDC80 complex to track depolymerizing microtubules. The polypeptide is Kinetochore protein Spc25 (Drosophila simulans (Fruit fly)).